Reading from the N-terminus, the 1060-residue chain is Protein FAM184B (1060 aa).

Polar residues predominate over residues 1–17 (MASALNSKINPPGTCQG). Residues 1–24 (MASALNSKINPPGTCQGSKADGGA) are disordered. Positions 51 to 159 (ALNTRQDEAE…EMLELKADYE (109 aa)) form a coiled coil. The disordered stretch occupies residues 165–191 (LTSHEATPQGRLPQESPETKSEPGQGP). 2 coiled-coil regions span residues 192–333 (EMQE…DRMM) and 402–502 (MKQQ…RLEE). Disordered regions lie at residues 532–566 (QDPCLKLDETSPRGEEYQDKLAAEEGTSSDEEERT), 681–700 (TEERLKKESSHSLQIQHQTH), and 762–803 (GRQQ…GSGE). Composition is skewed to basic and acidic residues over residues 536-554 (LKLDETSPRGEEYQDKLAA), 681-690 (TEERLKKESS), and 773-785 (DSKDHIIATEERG). Residues 584-769 (LKEKTSKIQR…ALGRQQASSQ (186 aa)) are a coiled coil. Positions 806 to 934 (GLWEENAQLQ…KQLTEERRFH (129 aa)) form a coiled coil. 2 stretches are compositionally biased toward polar residues: residues 994-1009 (SRINAPPITTSPSLDP) and 1018-1030 (KPNQSTDAKTATR). The tract at residues 994–1050 (SRINAPPITTSPSLDPSPSCGRTYKPNQSTDAKTATRTPDGETAQAKEVQQKQGSPH) is disordered.

It belongs to the FAM184 family.

The protein is Protein FAM184B (FAM184B) of Homo sapiens (Human).